A 540-amino-acid chain; its full sequence is Chaperonin GroEL 2/3 (540 aa).

Residues 30–33, Lys51, 87–91, Gly415, 479–481, and Asp495 contribute to the ATP site; these read TLGP, DGTTT, and NAA.

It belongs to the chaperonin (HSP60) family. As to quaternary structure, forms a cylinder of 14 subunits composed of two heptameric rings stacked back-to-back. Interacts with the co-chaperonin GroES.

The protein localises to the cytoplasm. The catalysed reaction is ATP + H2O + a folded polypeptide = ADP + phosphate + an unfolded polypeptide.. Together with its co-chaperonin GroES, plays an essential role in assisting protein folding. The GroEL-GroES system forms a nano-cage that allows encapsulation of the non-native substrate proteins and provides a physical environment optimized to promote and accelerate protein folding. The polypeptide is Chaperonin GroEL 2/3 (Paraburkholderia xenovorans (strain LB400)).